A 206-amino-acid polypeptide reads, in one-letter code: Guanylate kinase (206 aa).

In terms of domain architecture, Guanylate kinase-like spans 6-184; the sequence is GTLYIISAPS…ALGDLKAIFR (179 aa). 13–20 contacts ATP; sequence APSGAGKS.

This sequence belongs to the guanylate kinase family.

The protein localises to the cytoplasm. The enzyme catalyses GMP + ATP = GDP + ADP. Its function is as follows. Essential for recycling GMP and indirectly, cGMP. The protein is Guanylate kinase of Pseudomonas fluorescens (strain ATCC BAA-477 / NRRL B-23932 / Pf-5).